The following is a 115-amino-acid chain: Large ribosomal subunit protein bL20 (115 aa).

This sequence belongs to the bacterial ribosomal protein bL20 family.

Functionally, binds directly to 23S ribosomal RNA and is necessary for the in vitro assembly process of the 50S ribosomal subunit. It is not involved in the protein synthesizing functions of that subunit. This chain is Large ribosomal subunit protein bL20, found in Prochlorococcus marinus (strain SARG / CCMP1375 / SS120).